The chain runs to 555 residues: Sulfite reductase [NADPH] hemoprotein beta-component (555 aa).

[4Fe-4S] cluster is bound by residues Cys430, Cys436, Cys475, and Cys479. Cys479 lines the siroheme pocket.

This sequence belongs to the nitrite and sulfite reductase 4Fe-4S domain family. Alpha(8)-beta(8). The alpha component is a flavoprotein, the beta component is a hemoprotein. Siroheme serves as cofactor. It depends on [4Fe-4S] cluster as a cofactor.

It catalyses the reaction hydrogen sulfide + 3 NADP(+) + 3 H2O = sulfite + 3 NADPH + 4 H(+). The protein operates within sulfur metabolism; hydrogen sulfide biosynthesis; hydrogen sulfide from sulfite (NADPH route): step 1/1. In terms of biological role, component of the sulfite reductase complex that catalyzes the 6-electron reduction of sulfite to sulfide. This is one of several activities required for the biosynthesis of L-cysteine from sulfate. The polypeptide is Sulfite reductase [NADPH] hemoprotein beta-component (Leptospira biflexa serovar Patoc (strain Patoc 1 / Ames)).